A 446-amino-acid chain; its full sequence is N-succinylarginine dihydrolase 2 (446 aa).

Residues 20 to 29 (VGLSPGNLAS), Asn111, and 138 to 139 (HR) each bind substrate. Residue Glu175 is part of the active site. Arg212 provides a ligand contact to substrate. His246 is an active-site residue. Residues Asp248 and Asn361 each coordinate substrate. The active-site Nucleophile is the Cys367.

Belongs to the succinylarginine dihydrolase family. As to quaternary structure, homodimer.

It catalyses the reaction N(2)-succinyl-L-arginine + 2 H2O + 2 H(+) = N(2)-succinyl-L-ornithine + 2 NH4(+) + CO2. It participates in amino-acid degradation; L-arginine degradation via AST pathway; L-glutamate and succinate from L-arginine: step 2/5. Its function is as follows. Catalyzes the hydrolysis of N(2)-succinylarginine into N(2)-succinylornithine, ammonia and CO(2). The sequence is that of N-succinylarginine dihydrolase 2 from Caulobacter vibrioides (strain ATCC 19089 / CIP 103742 / CB 15) (Caulobacter crescentus).